Consider the following 746-residue polypeptide: Ribosome biogenesis protein BOP1 (746 aa).

Residues 1-116 form a disordered region; sequence MAGSRGAGRT…PCPRTEMASA (116 aa). A compositionally biased stretch (low complexity) spans 43-65; that stretch reads SHSTGSDSGVSDSEESVFSGLED. Over residues 66 to 87 the composition is skewed to acidic residues; sequence SGSDSSEDDDEGDEEGEDGALD. Positions 88–99 are enriched in basic and acidic residues; sequence DEGHSGIKKTTE. T106 is modified (phosphothreonine). Residue Y122 is modified to Phosphotyrosine. Residues S126 and S127 each carry the phosphoserine modification. The sufficient for nucleolar localization stretch occupies residues 265 to 427; the sequence is MGWIQPRRPR…CLSVSPGGQW (163 aa). WD repeat units follow at residues 411-450, 452-492, 532-576, 577-615, 618-657, 661-700, and 716-746; these read GHSD…CVRT, PVGG…RLVA, CHGK…SPFR, RSHG…LTKK, PNCK…KPYR, HHKK…DLLQ, and TRDL…RLFT.

It belongs to the WD repeat BOP1/ERB1 family. In terms of assembly, component of the PeBoW complex, composed of BOP1, PES1 and WDR12. The complex is held together by BOP1, which interacts with PES1 via its N-terminal domain and with WDR12 via a high-affinity interaction between the seven-bladed beta-propeller domains of the 2 proteins. The NOP7 complex associates with the 66S pre-ribosome. The PeBoW complex associates with DDX27, BOP1 interacts directly with DDX27.

It is found in the nucleus. The protein localises to the nucleolus. The protein resides in the nucleoplasm. Its function is as follows. Component of the PeBoW complex, which is required for maturation of 28S and 5.8S ribosomal RNAs and formation of the 60S ribosome. This chain is Ribosome biogenesis protein BOP1, found in Homo sapiens (Human).